Consider the following 262-residue polypeptide: Glucosamine-6-phosphate deaminase (262 aa).

The Proton acceptor; for enolization step role is filled by Asp-63. The active-site For ring-opening step is the Asn-129. Residue His-131 is the Proton acceptor; for ring-opening step of the active site. The active-site For ring-opening step is the Glu-136.

It belongs to the glucosamine/galactosamine-6-phosphate isomerase family. NagB subfamily.

It catalyses the reaction alpha-D-glucosamine 6-phosphate + H2O = beta-D-fructose 6-phosphate + NH4(+). It participates in amino-sugar metabolism; N-acetylneuraminate degradation; D-fructose 6-phosphate from N-acetylneuraminate: step 5/5. Functionally, catalyzes the reversible isomerization-deamination of glucosamine 6-phosphate (GlcN6P) to form fructose 6-phosphate (Fru6P) and ammonium ion. This is Glucosamine-6-phosphate deaminase from Bacillus cereus (strain G9842).